The chain runs to 345 residues: Phosphoribosylformylglycinamidine cyclo-ligase (345 aa).

It belongs to the AIR synthase family.

It localises to the cytoplasm. The catalysed reaction is 2-formamido-N(1)-(5-O-phospho-beta-D-ribosyl)acetamidine + ATP = 5-amino-1-(5-phospho-beta-D-ribosyl)imidazole + ADP + phosphate + H(+). Its pathway is purine metabolism; IMP biosynthesis via de novo pathway; 5-amino-1-(5-phospho-D-ribosyl)imidazole from N(2)-formyl-N(1)-(5-phospho-D-ribosyl)glycinamide: step 2/2. The chain is Phosphoribosylformylglycinamidine cyclo-ligase from Methylococcus capsulatus (strain ATCC 33009 / NCIMB 11132 / Bath).